We begin with the raw amino-acid sequence, 196 residues long: Molybdenum cofactor guanylyltransferase (196 aa).

GTP is bound by residues leucine 10–glycine 12, lysine 23, asparagine 51, aspartate 69, and aspartate 99. Residue aspartate 99 coordinates Mg(2+).

This sequence belongs to the MobA family. As to quaternary structure, monomer. The cofactor is Mg(2+).

Its subcellular location is the cytoplasm. The enzyme catalyses Mo-molybdopterin + GTP + H(+) = Mo-molybdopterin guanine dinucleotide + diphosphate. In terms of biological role, transfers a GMP moiety from GTP to Mo-molybdopterin (Mo-MPT) cofactor (Moco or molybdenum cofactor) to form Mo-molybdopterin guanine dinucleotide (Mo-MGD) cofactor. The chain is Molybdenum cofactor guanylyltransferase from Shewanella sediminis (strain HAW-EB3).